The primary structure comprises 339 residues: Fructose-1,6-bisphosphatase isozyme 2 (339 aa).

The important for interaction with ALDOA stretch occupies residues 3–10; it reads DRSPFETD. Residues valine 18 and 28 to 32 each bind AMP; that span reads TGELT. Residues aspartate 69 and glutamate 98 each contribute to the Mg(2+) site. 113-114 provides a ligand contact to AMP; that stretch reads KY. The Mg(2+) site is built by aspartate 119, leucine 121, and aspartate 122. Aspartate 122 is a binding site for substrate. Residue arginine 141 participates in AMP binding. The short motif at 204-208 is the Nuclear localization signal element; that stretch reads KKKGK. 213–216 is a substrate binding site; sequence NEGY. Residues tyrosine 216 and tyrosine 219 each carry the phosphotyrosine modification. Substrate-binding positions include 245–249, tyrosine 265, and lysine 275; that span reads YVGSM. A Mg(2+)-binding site is contributed by glutamate 281.

Belongs to the FBPase class 1 family. In terms of assembly, homotetramer. Interacts with ALDOA; the interaction blocks inhibition by physiological concentrations of AMP and reduces inhibition by Ca(2+). Interacts with alpha-actinin and F-actin. Mg(2+) serves as cofactor.

The protein localises to the cell junction. It is found in the cytoplasm. The protein resides in the nucleus. It localises to the myofibril. Its subcellular location is the sarcomere. The protein localises to the z line. The catalysed reaction is beta-D-fructose 1,6-bisphosphate + H2O = beta-D-fructose 6-phosphate + phosphate. It participates in carbohydrate biosynthesis; gluconeogenesis. Subject to complex allosteric regulation. The enzyme can assume an active R-state, or an inactive T-state. Intermediate conformations may exist. AMP acts as an allosteric inhibitor. Fructose 2,6-bisphosphate acts as a competitive inhibitor. Strongly inhibited by Ca(2+). Catalyzes the hydrolysis of fructose 1,6-bisphosphate to fructose 6-phosphate in the presence of divalent cations and probably participates in glycogen synthesis from carbohydrate precursors, such as lactate. This chain is Fructose-1,6-bisphosphatase isozyme 2 (FBP2), found in Oryctolagus cuniculus (Rabbit).